The following is a 171-amino-acid chain: Co-chaperone protein HscB (171 aa).

In terms of domain architecture, J spans 2 to 74 (DYFTLFGLPA…LTRAEYLLSL (73 aa)).

The protein belongs to the HscB family. As to quaternary structure, interacts with HscA and stimulates its ATPase activity. Interacts with IscU.

Co-chaperone involved in the maturation of iron-sulfur cluster-containing proteins. Seems to help targeting proteins to be folded toward HscA. In Salmonella paratyphi A (strain AKU_12601), this protein is Co-chaperone protein HscB.